The sequence spans 298 residues: MEDRYGREIRSFRLSITPKCNLKCFYCHKEGRNEEHGKLMSADEIGKIVKSSLEFGVRKIKISGGEPLLRTDLPEIIENIKDDQIKDISLTTNGILLEKYAQKLKDAGLDRVNVSLDTLDPEQYKQITAGGNIESVKKGIEKAIEVGLTPLKVNFLAMDCTINQLPAIMDYCRKIGAILQVIEFIPMEEELKHHHIDVVPIEEEIGKKADQVFTRKFMQNRKKYIVDGLEVEFVRPMDNTEFCGHCTRIRLTYDGYLKPCLLRDDNLVDVANPLRNGEDIRKYFIKCIEEREPFCKAQ.

The Radical SAM core domain occupies 4–221 (RYGREIRSFR…VFTRKFMQNR (218 aa)). R13 provides a ligand contact to GTP. [4Fe-4S] cluster-binding residues include C20 and C24. Residue Y26 participates in S-adenosyl-L-methionine binding. A [4Fe-4S] cluster-binding site is contributed by C27. K61 is a binding site for GTP. G65 provides a ligand contact to S-adenosyl-L-methionine. Position 91 (T91) interacts with GTP. An S-adenosyl-L-methionine-binding site is contributed by S115. K152 serves as a coordination point for GTP. Residues C243 and C246 each contribute to the [4Fe-4S] cluster site. 248–250 (RIR) contributes to the GTP binding site. Position 260 (C260) interacts with [4Fe-4S] cluster.

It belongs to the radical SAM superfamily. MoaA family. It depends on [4Fe-4S] cluster as a cofactor.

It carries out the reaction GTP + AH2 + S-adenosyl-L-methionine = (8S)-3',8-cyclo-7,8-dihydroguanosine 5'-triphosphate + 5'-deoxyadenosine + L-methionine + A + H(+). Its pathway is cofactor biosynthesis; molybdopterin biosynthesis. Catalyzes the cyclization of GTP to (8S)-3',8-cyclo-7,8-dihydroguanosine 5'-triphosphate. The sequence is that of Probable GTP 3',8-cyclase from Methanococcus maripaludis (strain C7 / ATCC BAA-1331).